We begin with the raw amino-acid sequence, 154 residues long: Small ribosomal subunit protein bS16 (154 aa).

Residues 82–154 (VQERAARSNP…EAAAEESTEA (73 aa)) are disordered. The segment covering 92 to 109 (KKAEPGEKAKERAEERAA) has biased composition (basic and acidic residues). A compositionally biased stretch (low complexity) spans 110–129 (KLAAAEEAANAPAEEPAAEP). Over residues 142–154 (PAEEAAAEESTEA) the composition is skewed to acidic residues.

Belongs to the bacterial ribosomal protein bS16 family.

The protein is Small ribosomal subunit protein bS16 of Rhizorhabdus wittichii (strain DSM 6014 / CCUG 31198 / JCM 15750 / NBRC 105917 / EY 4224 / RW1) (Sphingomonas wittichii).